The following is a 671-amino-acid chain: Protein KHNYN (671 aa).

4 disordered regions span residues 234-274 (RVAG…LSGE), 294-327 (EVAPLKGKASGKQEVPQQRGGFSVQGEPSGAHVP), 344-402 (HNGS…GGNL), and 577-626 (GPTL…RKTR). The segment covering 250-272 (TVEKEERKQDAVRDMGSGRKELS) has biased composition (basic and acidic residues). Over residues 351-365 (PRVPSPPPAPEPPWP) the composition is skewed to pro residues. At serine 355 the chain carries Phosphoserine. The segment covering 367–381 (GDRDRDRDRGDRGDK) has biased composition (basic and acidic residues). The region spanning 430–582 (LRHIVIDGSN…LGRNGPTLDE (153 aa)) is the RNase NYN domain. Polar residues predominate over residues 591 to 612 (QGSSKTQQPSKGSTEQANQQQG).

It belongs to the N4BP1 family.

The chain is Protein KHNYN (Khnyn) from Mus musculus (Mouse).